The chain runs to 200 residues: MLDYEIFNPYEGLIFDMDGTLIDTMPVHAQAWTMVGKKFGYEFDFQIMYNFGGATVRTIAGEMMKAANMPLDRIEDVLAAKRELSYQLIPTQSKLLPTFEIVKSFHQKKPIALGSGSHRKIIDMLMDKLAIAPYFNAIVSADDVKEHKPHPETFLRCAELIQANPSRCIVFEDADLGVQAGLSAGMDVFDVRTREIISPR.

Belongs to the HAD-like hydrolase superfamily. CbbY/CbbZ/Gph/YieH family.

This is an uncharacterized protein from Haemophilus influenzae (strain ATCC 51907 / DSM 11121 / KW20 / Rd).